Reading from the N-terminus, the 280-residue chain is uncharacterized protein (280 aa).

N-linked (GlcNAc...) asparagine; by host glycans are attached at residues asparagine 75, asparagine 98, asparagine 107, asparagine 143, asparagine 158, asparagine 170, asparagine 192, asparagine 207, asparagine 224, and asparagine 230. Residues 235–255 (AFTYGSWGVAMLLFAAVMVLV) traverse the membrane as a helical segment.

The protein belongs to the RL11 family.

The protein resides in the host membrane. This is an uncharacterized protein from Human cytomegalovirus (strain Merlin) (HHV-5).